Reading from the N-terminus, the 257-residue chain is MSGFDNLNSGFYQTSYSIDEQSQQSYDYGGSGGPYSKQYAGCEYSQQGRFVPPDMMQPQQTYTGQIYQPTQAYPPPTPQTFYGDSFEEEPPLLEELGINFDHIWQKTLTVLHPLRASDGSIMNETDLAGPVVFCLAFGATLLLAGKIQFGYVYGISAIGCLGMFCLLNLMSMTGVSFGCVASVLGYCLLPMILLSSFAVVFSLQGMVGILLTATIIGWCSFSASKIFISALAMDGQQLLVAYPCALLYGVFALISVF.

Topologically, residues 1–124 are cytoplasmic; it reads MSGFDNLNSG…RASDGSIMNE (124 aa). Residues 75 to 106 are interaction with Sec23; the sequence is PPTPQTFYGDSFEEEPPLLEELGINFDHIWQK. A helical membrane pass occupies residues 125–145; that stretch reads TDLAGPVVFCLAFGATLLLAG. A topological domain (lumenal) is located at residue K146. Residues 147 to 167 form a helical membrane-spanning segment; the sequence is IQFGYVYGISAIGCLGMFCLL. The Cytoplasmic segment spans residues 168-173; sequence NLMSMT. A helical transmembrane segment spans residues 174–194; the sequence is GVSFGCVASVLGYCLLPMILL. Topologically, residues 195-196 are lumenal; that stretch reads SS. Residues 197–217 form a helical membrane-spanning segment; that stretch reads FAVVFSLQGMVGILLTATIIG. The Cytoplasmic segment spans residues 218–236; sequence WCSFSASKIFISALAMDGQ. A helical membrane pass occupies residues 237–257; it reads QLLVAYPCALLYGVFALISVF.

The protein belongs to the YIP1 family. In terms of assembly, interacts with the COPII coat components Sec23 (SEC23A and/or SEC23B) and Sec24 (SEC24A and/or SEC24B). Interacts with YIF1A. May interact with RAB1A. Interacts with YIPF3 and YIPF4.

It localises to the endoplasmic reticulum membrane. Its subcellular location is the golgi apparatus. The protein resides in the cis-Golgi network membrane. The protein localises to the cytoplasmic vesicle. It is found in the COPII-coated vesicle. Functionally, plays a role in transport between endoplasmic reticulum and Golgi. In pancreatic beta cells, required to transport proinsulin from endoplasmic reticulum into the Golgi. This chain is Protein YIPF5, found in Rattus norvegicus (Rat).